A 474-amino-acid chain; its full sequence is GTPase Der (474 aa).

EngA-type G domains are found at residues 2 to 166 and 212 to 385; these read LRIA…NVPE and LKIA…TTVS. Residues 8–15, 55–59, 118–121, 218–225, 265–269, and 330–333 contribute to the GTP site; these read GRPNVGKS, DTGGV, NKAD, DTAGL, and NKWD. The region spanning 386–470 is the KH-like domain; the sequence is SKVPTPVVNK…PFDLEFKEKT (85 aa).

Belongs to the TRAFAC class TrmE-Era-EngA-EngB-Septin-like GTPase superfamily. EngA (Der) GTPase family. In terms of assembly, associates with the 50S ribosomal subunit.

In terms of biological role, GTPase that plays an essential role in the late steps of ribosome biogenesis. This is GTPase Der from Chlamydia abortus (strain DSM 27085 / S26/3) (Chlamydophila abortus).